The following is a 546-amino-acid chain: Cryptochrome DASH, chloroplastic/mitochondrial (546 aa).

The Photolyase/cryptochrome alpha/beta domain maps to 4–151 (TRVVIWFRND…TMERHWGSTL (148 aa)). The segment at 497–546 (PRRDFTEMGSPPGPRRGGGGGGRGRGRPGGSTPNRGTKARVASVYDTVYG) is disordered. The segment covering 511-525 (RRGGGGGGRGRGRPG) has biased composition (gly residues).

It belongs to the DNA photolyase class-1 family. FAD serves as cofactor. Requires (6R)-5,10-methylene-5,6,7,8-tetrahydrofolate as cofactor.

Its subcellular location is the plastid. It is found in the chloroplast. It localises to the mitochondrion. In terms of biological role, may have a photoreceptor function. Binds ss- and ds-DNA in a sequence non-specific manner, lacks photolyase activity. This is Cryptochrome DASH, chloroplastic/mitochondrial from Ostreococcus tauri.